A 258-amino-acid chain; its full sequence is Imidazole glycerol phosphate synthase subunit HisF (258 aa).

Active-site residues include D12 and D131.

The protein belongs to the HisA/HisF family. In terms of assembly, heterodimer of HisH and HisF.

It is found in the cytoplasm. The catalysed reaction is 5-[(5-phospho-1-deoxy-D-ribulos-1-ylimino)methylamino]-1-(5-phospho-beta-D-ribosyl)imidazole-4-carboxamide + L-glutamine = D-erythro-1-(imidazol-4-yl)glycerol 3-phosphate + 5-amino-1-(5-phospho-beta-D-ribosyl)imidazole-4-carboxamide + L-glutamate + H(+). The protein operates within amino-acid biosynthesis; L-histidine biosynthesis; L-histidine from 5-phospho-alpha-D-ribose 1-diphosphate: step 5/9. IGPS catalyzes the conversion of PRFAR and glutamine to IGP, AICAR and glutamate. The HisF subunit catalyzes the cyclization activity that produces IGP and AICAR from PRFAR using the ammonia provided by the HisH subunit. The sequence is that of Imidazole glycerol phosphate synthase subunit HisF from Arthrobacter sp. (strain FB24).